A 1034-amino-acid polypeptide reads, in one-letter code: MLKGGMLSRWKMWSPQYKILRNHLINFKSVSTYKNISGVNTKQPKSPRQFGCMPHVTKKRKYKYEEGKTYHGFQCERVEHISEFELTSYTFRYERTGTELWHIDRNDSNNVFSINFRTTPFDSTGLPHILEHLSLCGSQKYPVRDPFFKMLNRSVATFMNAMTGPDYTIYPFSTMNEIDFRNLQHIYLDAVFRPNLAYFDFLQEGWRLENKDIFDKQSKLVIKGVVYNEMKGAFSENAQVFSQNLLNNIFPDHTYRHVSGGNPLEIPKLAYNDLVEFHKKYYHPSNARIYSYGLFDASKTLALLDEEYLSDQSWVDNSYSLIRQQERWTQPRLVHISSRLDNMGTTIDRQNQIAIALLMCDATNIQESFELHVLSEVLIRGPNSPFYKNLIEPNFSGGYNQTTGYSSDTKDTTFVVGLQDLRVEDFKKCIEIFDKTIINSMNDGFDSQHVESVLHNLELSLKHQNPNFGNTLLFNSTALWNHDGDVVSNLRVSDMISGLRESISQNKKYFQEKIEKYFANNNHRLTLTMSPDEAYEDKFKQAELELVEQKVKLLDEVKIEKIYERGLILDSYQKAESNTDLLPCLTMNDVRDPPKWPKLFIQNVQNVRTQICKVPTNEITYFKCMFNITGLSHEETQLMPLFCNVISAMGTTNYNYREFDKHILLKTGGFDFKLHLIEDVRDSKSYSLSVMINTHALNNNVPEMFALCQELIKNVRFDDSERLKMLIENYISYISVGVASSGHLYAMLGATSQVCDAGKLKSLLYGVDHIDFMKNFVHSTSTVDICDKLSTIASKVFNKDNMRGAINTTQSYEPSAISNYEKFLESLPTFGKTQTSRNIHYLDPSCQQYVMNIPVNYCAKALFTVPYLHQDHPTLRVLAKLLSAKYLLPVIREKNGAYGAGAKISSDGIFSFYSYRDPNSTKTLNAFDETYKWLRANQNVIDQQSLFESKLGVLQQLDTPIAPGNIGIDYFLYEVSQEDFESYRSRMLSVTIDDLQCAIENYFGKESMHYGKCILGPVNANLELETSHKWIINN.

The N-terminal 29 residues, 1-29 (MLKGGMLSRWKMWSPQYKILRNHLINFKS), are a transit peptide targeting the mitochondrion. Histidine 128 serves as a coordination point for Zn(2+). Residue glutamate 131 is the Proton acceptor of the active site. Residues histidine 132 and glutamate 229 each contribute to the Zn(2+) site.

This sequence belongs to the peptidase M16 family. PreP subfamily. Homodimer. Requires Zn(2+) as cofactor.

It is found in the mitochondrion. In terms of biological role, ATP-independent protease that degrades mitochondrial transit peptides after their cleavage. Also degrades other unstructured peptides. This chain is Presequence protease, mitochondrial, found in Drosophila melanogaster (Fruit fly).